Reading from the N-terminus, the 161-residue chain is MDVTIQHPWFKRALGPFYHNRLFDQFFGEGLFEYDLLPFQSLFRTVLDSGISEVRSDRDQFLILLDHFSPEDLTVKVLDDFVEIHGKHNERQDDHGYISREFHRRYRLPSNVDKSALSCSLSADGMLTFCGPKVQSGMDASHSERAIPVSREEKASSAPNS.

At M1 the chain carries N-acetylmethionine. The tract at residues 1–53 (MDVTIQHPWFKRALGPFYHNRLFDQFFGEGLFEYDLLPFQSLFRTVLDSGISE) is required for complex formation with BFSP1 and BFSP2. 2 positions are modified to deamidated glutamine; partial: Q6 and Q40. The region spanning 41–150 (SLFRTVLDSG…SHSERAIPVS (110 aa)) is the sHSP domain. K87 is subject to N6-acetyllysine. Zn(2+) is bound at residue H88. Deamidated asparagine; partial is present on N89. 2 residues coordinate Zn(2+): E90 and H95. Position 110 is a phosphoserine (S110). N111 bears the Deamidated asparagine; partial mark. C119 and C130 are oxidised to a cystine. Position 135 is a deamidated glutamine; partial (Q135). The disordered stretch occupies residues 135–161 (QSGMDASHSERAIPVSREEKASSAPNS). Residues 141–155 (SHSERAIPVSREEKA) show a composition bias toward basic and acidic residues. H142 contributes to the Zn(2+) binding site. S150 carries O-linked (GlcNAc) serine glycosylation.

This sequence belongs to the small heat shock protein (HSP20) family. In terms of assembly, heteromer composed of three CRYAA and one CRYAB subunits. Inter-subunit bridging via zinc ions enhances stability, which is crucial as there is no protein turn over in the lens. Can also form homodimers and homotetramers (dimers of dimers) which serve as the building blocks of homooligomers. Within homooligomers, the zinc-binding motif is created from residues of 3 different molecules. His-88 and Glu-90 from one molecule are ligands of the zinc ion, and His-95 and His-142 residues from additional molecules complete the site with tetrahedral coordination geometry. Part of a complex required for lens intermediate filament formation composed of BFSP1, BFSP2 and CRYAA. Post-translationally, undergoes age-dependent proteolytical cleavage at the C-terminus.

The protein resides in the cytoplasm. It is found in the nucleus. Contributes to the transparency and refractive index of the lens. In its oxidized form (absence of intramolecular disulfide bond), acts as a chaperone, preventing aggregation of various proteins under a wide range of stress conditions. Required for the correct formation of lens intermediate filaments as part of a complex composed of BFSP1, BFSP2 and CRYAA. The sequence is that of Alpha-crystallin A chain (CRYAA) from Trichechus inunguis (Amazon manatee).